The chain runs to 530 residues: Bifunctional purine biosynthesis protein PurH (530 aa).

The region spanning 1-148 (MNNARPIRRA…KNHKDVTIVV (148 aa)) is the MGS-like domain.

This sequence belongs to the PurH family.

It catalyses the reaction (6R)-10-formyltetrahydrofolate + 5-amino-1-(5-phospho-beta-D-ribosyl)imidazole-4-carboxamide = 5-formamido-1-(5-phospho-D-ribosyl)imidazole-4-carboxamide + (6S)-5,6,7,8-tetrahydrofolate. The enzyme catalyses IMP + H2O = 5-formamido-1-(5-phospho-D-ribosyl)imidazole-4-carboxamide. Its pathway is purine metabolism; IMP biosynthesis via de novo pathway; 5-formamido-1-(5-phospho-D-ribosyl)imidazole-4-carboxamide from 5-amino-1-(5-phospho-D-ribosyl)imidazole-4-carboxamide (10-formyl THF route): step 1/1. The protein operates within purine metabolism; IMP biosynthesis via de novo pathway; IMP from 5-formamido-1-(5-phospho-D-ribosyl)imidazole-4-carboxamide: step 1/1. The chain is Bifunctional purine biosynthesis protein PurH from Vibrio atlanticus (strain LGP32) (Vibrio splendidus (strain Mel32)).